Reading from the N-terminus, the 360-residue chain is Phenylalanine--tRNA ligase alpha subunit (360 aa).

Residue E260 coordinates Mg(2+).

The protein belongs to the class-II aminoacyl-tRNA synthetase family. Phe-tRNA synthetase alpha subunit type 1 subfamily. Tetramer of two alpha and two beta subunits. Mg(2+) is required as a cofactor.

Its subcellular location is the cytoplasm. The enzyme catalyses tRNA(Phe) + L-phenylalanine + ATP = L-phenylalanyl-tRNA(Phe) + AMP + diphosphate + H(+). This is Phenylalanine--tRNA ligase alpha subunit from Bradyrhizobium diazoefficiens (strain JCM 10833 / BCRC 13528 / IAM 13628 / NBRC 14792 / USDA 110).